The following is an 82-amino-acid chain: uncharacterized protein (82 aa).

This is an uncharacterized protein from Treponema pallidum (strain Nichols).